Consider the following 119-residue polypeptide: MAEAKTGAKATKSAAAGAADGASKEKGPKHTPSTPKPRGRRKTRIGYVVSDKMQKTIVVELEDRVRHPLYGKIIRTTKKVKVHDEHSAAGIGDRVSLMETRPLSATKRWRLVEILEKAK.

Residues 1–21 (MAEAKTGAKATKSAAAGAADG) show a composition bias toward low complexity. The disordered stretch occupies residues 1-44 (MAEAKTGAKATKSAAAGAADGASKEKGPKHTPSTPKPRGRRKTR).

This sequence belongs to the universal ribosomal protein uS17 family. As to quaternary structure, part of the 30S ribosomal subunit.

One of the primary rRNA binding proteins, it binds specifically to the 5'-end of 16S ribosomal RNA. This Mycobacterium marinum (strain ATCC BAA-535 / M) protein is Small ribosomal subunit protein uS17.